The chain runs to 423 residues: 3-phosphoshikimate 1-carboxyvinyltransferase (423 aa).

Residues Lys-21, Ser-22, and Arg-26 each contribute to the 3-phosphoshikimate site. Phosphoenolpyruvate is bound at residue Lys-21. Phosphoenolpyruvate contacts are provided by Gly-93 and Arg-123. 3-phosphoshikimate contacts are provided by Ser-168, Ser-169, Gln-170, Ser-196, Asp-311, and Lys-338. Position 170 (Gln-170) interacts with phosphoenolpyruvate. Catalysis depends on Asp-311, which acts as the Proton acceptor. Residues Arg-342, Arg-383, and Lys-408 each contribute to the phosphoenolpyruvate site.

It belongs to the EPSP synthase family. Monomer.

The protein localises to the cytoplasm. It carries out the reaction 3-phosphoshikimate + phosphoenolpyruvate = 5-O-(1-carboxyvinyl)-3-phosphoshikimate + phosphate. It functions in the pathway metabolic intermediate biosynthesis; chorismate biosynthesis. Its function is as follows. Catalyzes the transfer of the enolpyruvyl moiety of phosphoenolpyruvate (PEP) to the 5-hydroxyl of shikimate-3-phosphate (S3P) to produce enolpyruvyl shikimate-3-phosphate and inorganic phosphate. This is 3-phosphoshikimate 1-carboxyvinyltransferase from Methanosphaerula palustris (strain ATCC BAA-1556 / DSM 19958 / E1-9c).